The following is a 385-amino-acid chain: Rhomboid domain-containing protein 3 (385 aa).

Helical transmembrane passes span 13–33, 58–78, 93–113, 146–166, and 168–188; these read ALPL…LLGA, LGHT…TLGW, SAVL…LGLS, WLLP…PPFL, and LLCG…WLEL. The UBA domain maps to 322 to 361; the sequence is SVSSLRLQQLQHMGFPTEQAAVALAATGRVEGAVSLLVEG.

The protein resides in the membrane. In Rattus norvegicus (Rat), this protein is Rhomboid domain-containing protein 3 (Rhbdd3).